The sequence spans 430 residues: RPM1 interacting protein 13 (430 aa).

Positions 1–21 (MGSGNHVDIVDVSSGEEDVDT) are disordered. The tract at residues 231–300 (RHRIRQPIPH…QVSQSSHHSS (70 aa)) is nuclear localization.

Interacts with RPM1 (via its NB-ARC domain). Binds to ARF1 in the nucleus.

The protein localises to the nucleus. Resistance protein interactor which positively enhances RPM1-mediated resistance to necrotrophic bacterial pathogens Pseudomonas syringae pv. tomato DC3000 harboring type III effector protein AvrRpm1 or AvrB, but prevents the hypersensitive response (HR) controlled by RPM1. Together with ARF1, promotes leaf senescence and cell death, probably by facilitating the translocation of ARF1 into the nucleus, and activates ROS-related enzymes (e.g. POD, CAT and SOD). This chain is RPM1 interacting protein 13, found in Arabidopsis thaliana (Mouse-ear cress).